The following is a 311-amino-acid chain: Pyrimidine-specific ribonucleoside hydrolase RihA (311 aa).

Histidine 240 is a catalytic residue.

It belongs to the IUNH family. RihA subfamily.

Functionally, hydrolyzes with equal efficiency cytidine or uridine to ribose and cytosine or uracil, respectively. The sequence is that of Pyrimidine-specific ribonucleoside hydrolase RihA from Escherichia coli O8 (strain IAI1).